The sequence spans 294 residues: 4-hydroxy-tetrahydrodipicolinate synthase (294 aa).

T47 is a binding site for pyruvate. The active-site Proton donor/acceptor is the Y135. The Schiff-base intermediate with substrate role is filled by K163. V205 lines the pyruvate pocket.

It belongs to the DapA family. In terms of assembly, homotetramer; dimer of dimers.

Its subcellular location is the cytoplasm. The enzyme catalyses L-aspartate 4-semialdehyde + pyruvate = (2S,4S)-4-hydroxy-2,3,4,5-tetrahydrodipicolinate + H2O + H(+). It functions in the pathway amino-acid biosynthesis; L-lysine biosynthesis via DAP pathway; (S)-tetrahydrodipicolinate from L-aspartate: step 3/4. Its function is as follows. Catalyzes the condensation of (S)-aspartate-beta-semialdehyde [(S)-ASA] and pyruvate to 4-hydroxy-tetrahydrodipicolinate (HTPA). The chain is 4-hydroxy-tetrahydrodipicolinate synthase from Rickettsia bellii (strain OSU 85-389).